The primary structure comprises 230 residues: Ribonuclease 3 (230 aa).

The region spanning 5 to 125 is the RNase III domain; that stretch reads YSRLYKILGY…IIGAIYLDSD (121 aa). A Mg(2+)-binding site is contributed by Glu40. Residue Asp44 is part of the active site. 2 residues coordinate Mg(2+): Asp111 and Glu114. The active site involves Glu114. A DRBM domain is found at 153-223; the sequence is DSKSKLQEIL…AEKMIQILSQ (71 aa).

It belongs to the ribonuclease III family. Homodimer. Mg(2+) serves as cofactor.

Its subcellular location is the cytoplasm. It carries out the reaction Endonucleolytic cleavage to 5'-phosphomonoester.. Its function is as follows. Digests double-stranded RNA. Involved in the processing of primary rRNA transcript to yield the immediate precursors to the large and small rRNAs (23S and 16S). Processes some mRNAs, and tRNAs when they are encoded in the rRNA operon. Processes pre-crRNA and tracrRNA of type II CRISPR loci if present in the organism. This chain is Ribonuclease 3, found in Francisella philomiragia subsp. philomiragia (strain ATCC 25017 / CCUG 19701 / FSC 153 / O#319-036).